The sequence spans 288 residues: Protoheme IX farnesyltransferase (288 aa).

The next 9 helical transmembrane spans lie at Val16–Asn36, Leu37–Ala57, Ile88–Phe108, Leu111–Leu131, Trp138–Val158, Phe162–Trp182, Ala210–Phe230, Val236–Val256, and Leu265–Phe285.

It belongs to the UbiA prenyltransferase family. Protoheme IX farnesyltransferase subfamily.

The protein localises to the cell membrane. The catalysed reaction is heme b + (2E,6E)-farnesyl diphosphate + H2O = Fe(II)-heme o + diphosphate. It functions in the pathway porphyrin-containing compound metabolism; heme O biosynthesis; heme O from protoheme: step 1/1. In terms of biological role, converts heme B (protoheme IX) to heme O by substitution of the vinyl group on carbon 2 of heme B porphyrin ring with a hydroxyethyl farnesyl side group. This chain is Protoheme IX farnesyltransferase, found in Thermoplasma acidophilum (strain ATCC 25905 / DSM 1728 / JCM 9062 / NBRC 15155 / AMRC-C165).